The primary structure comprises 599 residues: NADH-quinone oxidoreductase subunit C/D (599 aa).

The segment at 1–189 (MTDLTTHDLA…DPFVLTKQKE (189 aa)) is NADH dehydrogenase I subunit C. The interval 213–599 (DFMFLNLGPN…IDFVMSDVDR (387 aa)) is NADH dehydrogenase I subunit D.

It in the N-terminal section; belongs to the complex I 30 kDa subunit family. This sequence in the C-terminal section; belongs to the complex I 49 kDa subunit family. In terms of assembly, NDH-1 is composed of 13 different subunits. Subunits NuoB, CD, E, F, and G constitute the peripheral sector of the complex.

The protein resides in the cell inner membrane. The catalysed reaction is a quinone + NADH + 5 H(+)(in) = a quinol + NAD(+) + 4 H(+)(out). Functionally, NDH-1 shuttles electrons from NADH, via FMN and iron-sulfur (Fe-S) centers, to quinones in the respiratory chain. The immediate electron acceptor for the enzyme in this species is believed to be ubiquinone. Couples the redox reaction to proton translocation (for every two electrons transferred, four hydrogen ions are translocated across the cytoplasmic membrane), and thus conserves the redox energy in a proton gradient. This chain is NADH-quinone oxidoreductase subunit C/D, found in Pectobacterium carotovorum subsp. carotovorum (strain PC1).